A 494-amino-acid polypeptide reads, in one-letter code: BUB3-interacting and GLEBS motif-containing protein ZNF207 (494 aa).

Residues 1 to 92 form a microtubule-binding region region; that stretch reads MGRKKKKQLK…EGIPEKDMDE (92 aa). 2 C2H2-type zinc fingers span residues 11–34 and 35–58; these read PWCW…KAKH and FKCH…MQVH. Basic and acidic residues predominate over residues 100–111; it reads KTQESQKKKQQD. 3 disordered regions span residues 100-161, 250-377, and 455-494; these read KTQE…PGIP, NRPP…SATS, and LPGA…GGRY. A compositionally biased stretch (acidic residues) spans 112 to 121; sequence DSDEYDDDDS. The span at 127-136 shows a compositional bias: polar residues; sequence FQPQPVQPQQ. Residues 142-161 are compositionally biased toward pro residues; the sequence is MAQPGLPPVPGAPGMPPGIP. Over residues 283-300 the composition is skewed to low complexity; that stretch reads SSSTASSNSESLSASSKA. The span at 323–332 shows a compositional bias: polar residues; the sequence is LNSTPATSTE. Residues 342 to 377 show a composition bias toward low complexity; that stretch reads TQSTASTTSTTNSTAAKPAASITSKPATLTTTSATS. Residues 375-407 are GLEBS; it reads ATSKLIHPDEDISLEERRAQLPKYQRNLPRPGQ. Residues 463-483 show a composition bias toward pro residues; the sequence is GQGPPMVPPYQGGPPRPPMGM.

Interacts (via GLEBS region) with BUB3.

Its subcellular location is the nucleus. It is found in the chromosome. It localises to the centromere. The protein localises to the kinetochore. The protein resides in the cytoplasm. Its subcellular location is the cytoskeleton. It is found in the spindle. Its function is as follows. Kinetochore- and microtubule-binding protein that plays a key role in spindle assembly. ZNF207/BuGZ is mainly composed of disordered low-complexity regions and undergoes phase transition or coacervation to form temperature-dependent liquid droplets. Coacervation promotes microtubule bundling and concentrates tubulin, promoting microtubule polymerization and assembly of spindle and spindle matrix by concentrating its building blocks. Also acts as a regulator of mitotic chromosome alignment by mediating the stability and kinetochore loading of BUB3. Mechanisms by which BUB3 is protected are unclear: according to a first report, ZNF207/BuGZ may act by blocking ubiquitination and proteasomal degradation of BUB3. According to another report, the stabilization is independent of the proteasome. This chain is BUB3-interacting and GLEBS motif-containing protein ZNF207, found in Pongo abelii (Sumatran orangutan).